The primary structure comprises 270 residues: Diaminopimelate epimerase (270 aa).

Residues Asn15, Gln49, and Asn66 each contribute to the substrate site. Cys75 (proton donor) is an active-site residue. Substrate is bound by residues 76-77 (GN), Asn155, Asn187, and 204-205 (ER). Cys213 (proton acceptor) is an active-site residue. Substrate is bound at residue 214–215 (GS).

It belongs to the diaminopimelate epimerase family. Homodimer.

The protein localises to the cytoplasm. The enzyme catalyses (2S,6S)-2,6-diaminopimelate = meso-2,6-diaminopimelate. The protein operates within amino-acid biosynthesis; L-lysine biosynthesis via DAP pathway; DL-2,6-diaminopimelate from LL-2,6-diaminopimelate: step 1/1. Its function is as follows. Catalyzes the stereoinversion of LL-2,6-diaminopimelate (L,L-DAP) to meso-diaminopimelate (meso-DAP), a precursor of L-lysine and an essential component of the bacterial peptidoglycan. This Rickettsia prowazekii (strain Madrid E) protein is Diaminopimelate epimerase.